The primary structure comprises 357 residues: uncharacterized protein (357 aa).

Transmembrane regions (helical) follow at residues 13–33, 44–64, 72–92, 148–168, 181–201, 203–223, 266–286, 293–313, and 327–347; these read PVTG…TYLV, IACT…CAVY, VSTF…TCFL, VLTY…FCFV, LPIS…SGFF, YLFI…LGIW, IALT…SALF, SISG…PFLI, and YWVL…VVLL.

It localises to the mitochondrion membrane. This is an uncharacterized protein from Schizosaccharomyces pombe (strain 972 / ATCC 24843) (Fission yeast).